The sequence spans 58 residues: Small ribosomal subunit protein bS21B (58 aa).

The protein belongs to the bacterial ribosomal protein bS21 family.

This Nostoc sp. (strain PCC 7120 / SAG 25.82 / UTEX 2576) protein is Small ribosomal subunit protein bS21B (rpsU2).